Here is a 760-residue protein sequence, read N- to C-terminus: MRPTPQRRAVATGALVAVTAMLAVGVQTTSANAGQDKAAHPAPRQSIHKPDPGAEPVKLTPSQRAELIRDANATKAETAKNLGLGAKEKLVVKDVVKDKNGTLHTRYERTYDGLPVLGGDLVVDATRSGQVKTAAKATKQRIAVASTTPSLAASAAEKDAVKAARAKGSKAGKADKAPRKVVWAAKGTPVLAYETVVGGVQDDGTPSQLHVITDAKTGKKLFEFQGVKQGTGNSQHSGQVQIGTTKSGSSYQMNDTTRGGHKTYNLNHGSSGTGTLFTDSDDVWGNGTNSDPATAGVDAHYGAQLTWDYYKNVHGRNGIRGDGVGAYSRVHYGNNYVNAFWDDSCFCMTYGDGNGIPLTSIDVAAHEMTHGVTSATANLTYSGESGGLNEATSDMMATAVEFWANNPADPGDYLIGEKININGDGTPLRYMDKPSKDGASKDAWYSGLGGIDVHYSSGPANHWFYLASEGSGPKDIGGVHYDSPTSDGLPVTGVGRDNAAKIWFKALTERMQSNTDYKGARDATLWAAGELFGVNSDTYNNVANAWAAINVGPRASSGVSVTSPGDQTSIVNQAVSLQIKATGSTSGALTYSATGLPAGLSINASTGLISGTPTTTGTSNVTVTVKDSAGKTGSTSFKWTVNTTGGGSVFENTTQVAIPDAGAAVTSPIVVTRSGNGPSALKVDVNITHTYRGDLTIDLVAPNGKTWRLKNSDAWDSAADVSETYTVDASSVSANGTWKLKVQDVYSGDSGTIDKWRLTF.

Positions 1–33 are cleaved as a signal peptide; it reads MRPTPQRRAVATGALVAVTAMLAVGVQTTSANA. Disordered regions lie at residues 32–59 and 228–265; these read NAGQ…PVKL and KQGT…KTYN. The propeptide occupies 34 to 229; sequence GQDKAAHPAP…KLFEFQGVKQ (196 aa). Over residues 228–257 the composition is skewed to polar residues; sequence KQGTGNSQHSGQVQIGTTKSGSSYQMNDTT. His-366 contacts Zn(2+). Glu-367 is an active-site residue. Zn(2+) contacts are provided by His-370 and Glu-390. The active-site Proton donor is His-454. The region spanning 640–760 is the P/Homo B domain; sequence TVNTTGGGSV…GTIDKWRLTF (121 aa).

Belongs to the peptidase M4 family. It depends on Zn(2+) as a cofactor.

Its subcellular location is the secreted. Functionally, cleaves the N-terminal propeptide of transglutaminase thus activating it. The chain is Transglutaminase-activating metalloprotease from Streptomyces mobaraensis (Streptoverticillium mobaraense).